A 195-amino-acid chain; its full sequence is Phosphoribosylglycinamide formyltransferase (195 aa).

N(1)-(5-phospho-beta-D-ribosyl)glycinamide is bound at residue 12–14 (GSN). Residues lysine 65, 90-93 (MRLI), and asparagine 107 contribute to the (6R)-10-formyltetrahydrofolate site. The active-site Proton donor is the histidine 109.

Belongs to the GART family.

The catalysed reaction is N(1)-(5-phospho-beta-D-ribosyl)glycinamide + (6R)-10-formyltetrahydrofolate = N(2)-formyl-N(1)-(5-phospho-beta-D-ribosyl)glycinamide + (6S)-5,6,7,8-tetrahydrofolate + H(+). Its pathway is purine metabolism; IMP biosynthesis via de novo pathway; N(2)-formyl-N(1)-(5-phospho-D-ribosyl)glycinamide from N(1)-(5-phospho-D-ribosyl)glycinamide (10-formyl THF route): step 1/1. Functionally, catalyzes the transfer of a formyl group from 10-formyltetrahydrofolate to 5-phospho-ribosyl-glycinamide (GAR), producing 5-phospho-ribosyl-N-formylglycinamide (FGAR) and tetrahydrofolate. This chain is Phosphoribosylglycinamide formyltransferase, found in Bacillus subtilis (strain 168).